A 127-amino-acid chain; its full sequence is Small ribosomal subunit protein uS11 (127 aa).

Belongs to the universal ribosomal protein uS11 family. In terms of assembly, part of the 30S ribosomal subunit. Interacts with proteins S7 and S18. Binds to IF-3.

Its function is as follows. Located on the platform of the 30S subunit, it bridges several disparate RNA helices of the 16S rRNA. Forms part of the Shine-Dalgarno cleft in the 70S ribosome. This is Small ribosomal subunit protein uS11 from Streptococcus suis (strain 98HAH33).